The sequence spans 524 residues: Glutamyl-tRNA(Gln) amidotransferase subunit A (524 aa).

Catalysis depends on charge relay system residues lysine 109 and serine 184. The active-site Acyl-ester intermediate is the serine 208.

This sequence belongs to the amidase family. GatA subfamily. Heterotrimer of A, B and C subunits.

It carries out the reaction L-glutamyl-tRNA(Gln) + L-glutamine + ATP + H2O = L-glutaminyl-tRNA(Gln) + L-glutamate + ADP + phosphate + H(+). Its function is as follows. Allows the formation of correctly charged Gln-tRNA(Gln) through the transamidation of misacylated Glu-tRNA(Gln) in organisms which lack glutaminyl-tRNA synthetase. The reaction takes place in the presence of glutamine and ATP through an activated gamma-phospho-Glu-tRNA(Gln). The chain is Glutamyl-tRNA(Gln) amidotransferase subunit A from Tropheryma whipplei (strain TW08/27) (Whipple's bacillus).